Consider the following 248-residue polypeptide: Probable septum site-determining protein MinC (248 aa).

Residues 94 to 126 (GMPPAMRGGQPAADFEAPAGEPQANPGAPEPQI) are disordered.

The protein belongs to the MinC family. Interacts with MinD and FtsZ.

Functionally, cell division inhibitor that blocks the formation of polar Z ring septums. Rapidly oscillates between the poles of the cell to destabilize FtsZ filaments that have formed before they mature into polar Z rings. Prevents FtsZ polymerization. The sequence is that of Probable septum site-determining protein MinC from Brucella suis biovar 1 (strain 1330).